Reading from the N-terminus, the 334-residue chain is Ribosomal RNA small subunit methyltransferase H (334 aa).

S-adenosyl-L-methionine-binding positions include Gly53–His55, Asp72, Phe99, Asp122, and His129.

This sequence belongs to the methyltransferase superfamily. RsmH family.

It is found in the cytoplasm. The enzyme catalyses cytidine(1402) in 16S rRNA + S-adenosyl-L-methionine = N(4)-methylcytidine(1402) in 16S rRNA + S-adenosyl-L-homocysteine + H(+). In terms of biological role, specifically methylates the N4 position of cytidine in position 1402 (C1402) of 16S rRNA. This is Ribosomal RNA small subunit methyltransferase H from Leptospira interrogans serogroup Icterohaemorrhagiae serovar Lai (strain 56601).